Here is a 251-residue protein sequence, read N- to C-terminus: Uroporphyrinogen-III synthase (251 aa).

Residues 231–251 (PAPNPESLASSIVAFDEENSS) form a disordered region.

Belongs to the uroporphyrinogen-III synthase family.

It carries out the reaction hydroxymethylbilane = uroporphyrinogen III + H2O. Its pathway is porphyrin-containing compound metabolism; protoporphyrin-IX biosynthesis; coproporphyrinogen-III from 5-aminolevulinate: step 3/4. Its function is as follows. Catalyzes cyclization of the linear tetrapyrrole, hydroxymethylbilane, to the macrocyclic uroporphyrinogen III. The polypeptide is Uroporphyrinogen-III synthase (ups1) (Schizosaccharomyces pombe (strain 972 / ATCC 24843) (Fission yeast)).